We begin with the raw amino-acid sequence, 123 residues long: MAKPSYVKFEVPQELAEKALEAVEIARDTGRIRKGTNETTKAVERGQAKLVIIAEDVDPEEIVAHLPPLCEEKEIPYVYVPSKKELGAAAGLEVPAASVAIIEPGKARELVEDIAMKVKELMK.

It belongs to the eukaryotic ribosomal protein eL8 family. Part of the 50S ribosomal subunit. Probably part of the RNase P complex.

Its subcellular location is the cytoplasm. Its function is as follows. Multifunctional RNA-binding protein that recognizes the K-turn motif in ribosomal RNA, the RNA component of RNase P, box H/ACA, box C/D and box C'/D' sRNAs. In Thermococcus kodakarensis (strain ATCC BAA-918 / JCM 12380 / KOD1) (Pyrococcus kodakaraensis (strain KOD1)), this protein is Large ribosomal subunit protein eL8.